The chain runs to 447 residues: Beclin-1 (447 aa).

The BH3 motif lies at 105–124 (TMENLSRRLKVTSNLFDIMS). The segment at 109–156 (LSRRLKVTSNLFDIMSGQTDIDHPLCEECTDTLLDHLDTQLNITENEC) is interaction with BCL2 and BCL2L1 isoform Bcl-X(L). Residues 140-214 (TLLDHLDTQL…VAKELDEGRN (75 aa)) are a coiled coil. The interval 242–447 (DDLKSVDNQM…AWVSSQFYNR (206 aa)) is evolutionary conserved domain (ECD). A Glycyl lysine isopeptide (Lys-Gly) (interchain with G-Cter in ubiquitin) cross-link involves residue Lys-399. Residues 422 to 447 (WTKALKFMLTNLKWGLAWVSSQFYNR) are required for membrane-association.

Belongs to the beclin family. As to quaternary structure, component of the PI3K (PI3KC3/PI3K-III/class III phosphatidylinositol 3-kinase) complex. Interacts with the poly-Gln domain of ATXN3; the interaction causes deubiquitination at Lys-399 and stabilizes BECN1. Post-translationally, polyubiquitinated at Lys-399 with 'Lys-48'-linkages. 'Lys-48'-linked polyubiquitination of Lys-399 leads to degradation. Deubiquitinated by ATXN3, leading to stabilization.

Its subcellular location is the cytoplasm. It is found in the golgi apparatus. It localises to the trans-Golgi network membrane. The protein resides in the endosome membrane. The protein localises to the endoplasmic reticulum membrane. Its subcellular location is the mitochondrion membrane. It is found in the endosome. It localises to the cytoplasmic vesicle. The protein resides in the autophagosome. Its function is as follows. Plays a central role in autophagy. Acts as a core subunit of different PI3K complex forms that mediate formation of phosphatidylinositol 3-phosphate and are believed to play a role in multiple membrane trafficking pathways: PI3KC3-C1 is involved in initiation of autophagosomes and PI3KC3-C2 in maturation of autophagosomes and endocytosis. Involved in regulation of degradative endocytic trafficking and required for the abscission step in cytokinesis, probably in the context of PI3KC3-C2. Essential for the formation of PI3KC3-C2 but not PI3KC3-C1 PI3K complex forms. Involved in endocytosis including endosome formation in neuronal cells. The polypeptide is Beclin-1 (becn1) (Danio rerio (Zebrafish)).